The chain runs to 208 residues: Protein-L-isoaspartate O-methyltransferase (208 aa).

Ser59 is a catalytic residue.

Belongs to the methyltransferase superfamily. L-isoaspartyl/D-aspartyl protein methyltransferase family.

The protein localises to the cytoplasm. The catalysed reaction is [protein]-L-isoaspartate + S-adenosyl-L-methionine = [protein]-L-isoaspartate alpha-methyl ester + S-adenosyl-L-homocysteine. In terms of biological role, catalyzes the methyl esterification of L-isoaspartyl residues in peptides and proteins that result from spontaneous decomposition of normal L-aspartyl and L-asparaginyl residues. It plays a role in the repair and/or degradation of damaged proteins. In Salmonella arizonae (strain ATCC BAA-731 / CDC346-86 / RSK2980), this protein is Protein-L-isoaspartate O-methyltransferase.